We begin with the raw amino-acid sequence, 440 residues long: Endoglucanase B (440 aa).

The signal sequence occupies residues 1–33 (MNKRLSRGKISLLASVFVTTTFMGGVNVLASTA). E179 acts as the Proton donor in catalysis. E305 functions as the Nucleophile in the catalytic mechanism. The region spanning 381–440 (TSYSLGDVNKDGKVNAIDYAVLKSILLGTNTNVDLSVSDMNKDGKVNALDLAVLKKMLLS) is the Dockerin domain.

The protein belongs to the glycosyl hydrolase 5 (cellulase A) family.

The enzyme catalyses Endohydrolysis of (1-&gt;4)-beta-D-glucosidic linkages in cellulose, lichenin and cereal beta-D-glucans.. It catalyses the reaction Endohydrolysis of (1-&gt;4)-beta-D-xylosidic linkages in xylans.. Its function is as follows. Has endoglucanase activity on carboxymethyl-cellulose (CMC), xylan and lichenan, but not Avicel. In Clostridium cellulovorans (strain ATCC 35296 / DSM 3052 / OCM 3 / 743B), this protein is Endoglucanase B (engB).